Reading from the N-terminus, the 847-residue chain is Bifunctional lysine-specific demethylase and histidyl-hydroxylase NO66 (847 aa).

The segment covering 1 to 24 (MEKVTNSAAAKPQGNNKKQESAYN) has biased composition (polar residues). 3 disordered regions span residues 1 to 45 (MEKV…SDLL), 203 to 223 (AEADAKNNDTKKAGQSAKESV), and 254 to 320 (AEKE…ERKQ). Residues 203-214 (AEADAKNNDTKK) are compositionally biased toward basic and acidic residues. Residues 268–278 (STSSKEAAAAK) show a composition bias toward low complexity. Over residues 279-288 (TADHERRLLA) the composition is skewed to basic and acidic residues. Positions 304–314 (AMESVATQGAS) are enriched in polar residues. Serine 323 carries the phosphoserine modification. Threonine 329 is modified (phosphothreonine). Phosphoserine is present on serine 330. The segment at 377 to 401 (KAPEEGNNNNDEKEMSTETSETHKT) is disordered. The segment covering 386–401 (NDEKEMSTETSETHKT) has biased composition (basic and acidic residues). The JmjC domain occupies 499–644 (CSIRLLNPSA…NLLETLMPMV (146 aa)). Residues histidine 545, aspartate 547, and histidine 610 each coordinate Fe cation.

This sequence belongs to the ROX family. NO66 subfamily. Requires Fe(2+) as cofactor.

It is found in the nucleus. It carries out the reaction N(6),N(6)-dimethyl-L-lysyl(36)-[histone H3] + 2 2-oxoglutarate + 2 O2 = L-lysyl(36)-[histone H3] + 2 formaldehyde + 2 succinate + 2 CO2. Oxygenase that can act as both a histone lysine demethylase and a ribosomal histidine hydroxylase. Specifically demethylates 'Lys-4' (H3K4me) and 'Lys-36' (H3K36me) of histone H3, thereby playing a central role in histone code. The chain is Bifunctional lysine-specific demethylase and histidyl-hydroxylase NO66 from Drosophila simulans (Fruit fly).